The primary structure comprises 103 residues: N(4)-acetylcytidine amidohydrolase (103 aa).

In terms of domain architecture, ASCH spans 6 to 101 (ITFFQRFQDD…QTQFYVIEFK (96 aa)). Lys-21 (proton acceptor) is an active-site residue. Thr-24 acts as the Nucleophile in catalysis. The active-site Proton donor is the Glu-74.

This sequence belongs to the N(4)-acetylcytidine amidohydrolase family.

The catalysed reaction is N(4)-acetylcytidine + H2O = cytidine + acetate + H(+). The enzyme catalyses N(4)-acetyl-2'-deoxycytidine + H2O = 2'-deoxycytidine + acetate + H(+). It catalyses the reaction N(4)-acetylcytosine + H2O = cytosine + acetate + H(+). Functionally, catalyzes the hydrolysis of N(4)-acetylcytidine (ac4C). The sequence is that of N(4)-acetylcytidine amidohydrolase (yqfB) from Escherichia coli (strain K12 / MC4100 / BW2952).